The chain runs to 272 residues: ATP synthase subunit a (272 aa).

5 consecutive transmembrane segments (helical) span residues 41–61 (VLNI…LVLF), 101–121 (VIAP…FMDL), 147–167 (DVNI…FYSI), 221–241 (LIFI…LSVP), and 243–263 (AIFH…LTIV).

This sequence belongs to the ATPase A chain family. In terms of assembly, F-type ATPases have 2 components, CF(1) - the catalytic core - and CF(0) - the membrane proton channel. CF(1) has five subunits: alpha(3), beta(3), gamma(1), delta(1), epsilon(1). CF(0) has three main subunits: a(1), b(2) and c(9-12). The alpha and beta chains form an alternating ring which encloses part of the gamma chain. CF(1) is attached to CF(0) by a central stalk formed by the gamma and epsilon chains, while a peripheral stalk is formed by the delta and b chains.

Its subcellular location is the cell inner membrane. Key component of the proton channel; it plays a direct role in the translocation of protons across the membrane. The sequence is that of ATP synthase subunit a from Erwinia tasmaniensis (strain DSM 17950 / CFBP 7177 / CIP 109463 / NCPPB 4357 / Et1/99).